Reading from the N-terminus, the 897-residue chain is Patched domain-containing protein 1 (897 aa).

Residues 25–45 (PVFFLTVPAVLTIIFGSTVLS) form a helical membrane-spanning segment. Residues N132, N167, and N179 are each glycosylated (N-linked (GlcNAc...) asparagine). 2 helical membrane-spanning segments follow: residues 271 to 291 (GVLAKSEVLVSLVLVLLAATI) and 306 to 326 (GLLGVLTICIANVTAAGIFFI). The 161-residue stretch at 273–433 (LAKSEVLVSL…FSFYGSCLVF (161 aa)) folds into the SSD domain. Residue N332 is glycosylated (N-linked (GlcNAc...) asparagine). 4 helical membrane-spanning segments follow: residues 335-355 (LLGIPFFAMGHGTKGVFELLA), 377-397 (VMVCYTMTSSLYIITFGMGAS), 414-434 (VAVLVNYFYVFSFYGSCLVFA), and 506-526 (PFVVILYLIYASFSFMGCLQI). 2 N-linked (GlcNAc...) asparagine glycosylation sites follow: N572 and N603. The next 3 membrane-spanning stretches (helical) occupy residues 701–721 (PILTSGFSVLTILILTFFLVI), 727–747 (FWLILTVTSVELGVLGLMTLW), and 754–774 (ISILCLIYTLNFAMDHCAPHL). An N-linked (GlcNAc...) asparagine glycan is attached at N803. Helical transmembrane passes span 806–826 (CFVIGIMPLLFVPSNLTYTLF) and 831–851 (LTAGCTVLHCFVILPVFLTFF). Residues 856–866 (KRHKKKKRAKR) are compositionally biased toward basic residues. Positions 856 to 881 (KRHKKKKRAKRKEREREREREREREE) are disordered. Residues 867 to 881 (KEREREREREREREE) show a composition bias toward basic and acidic residues.

It belongs to the patched family.

It localises to the cell membrane. Its subcellular location is the cell projection. The protein resides in the dendritic spine. Functionally, can bind cholesterol in vitro. In Danio rerio (Zebrafish), this protein is Patched domain-containing protein 1 (ptchd1).